A 663-amino-acid polypeptide reads, in one-letter code: Translation factor guf1, mitochondrial (663 aa).

A mitochondrion-targeting transit peptide spans 1 to 51; it reads MRGCLQVLRWLSTSTARRPVSSRPLHEIFPKSEFRRPFTSTILRQAQASRN. Residues 65–245 form the tr-type G domain; sequence ERFRNFCIVA…TVIERIPAPV (181 aa). GTP is bound by residues 74–81, 138–142, and 192–195; these read AHVDHGKS, DTPGH, and NKVD.

The protein belongs to the TRAFAC class translation factor GTPase superfamily. Classic translation factor GTPase family. LepA subfamily.

The protein localises to the mitochondrion inner membrane. The enzyme catalyses GTP + H2O = GDP + phosphate + H(+). Promotes mitochondrial protein synthesis. May act as a fidelity factor of the translation reaction, by catalyzing a one-codon backward translocation of tRNAs on improperly translocated ribosomes. Binds to mitochondrial ribosomes in a GTP-dependent manner. The sequence is that of Translation factor guf1, mitochondrial (guf1) from Talaromyces marneffei (strain ATCC 18224 / CBS 334.59 / QM 7333) (Penicillium marneffei).